The sequence spans 416 residues: Lipase A (416 aa).

A signal peptide spans 1–32; the sequence is MRLAPQKPLLLSTVLHLLLSIWMLGFASLAGA. Cystine bridges form between C67–C391 and C177–C180. The N-linked (GlcNAc...) asparagine glycan is linked to N179. S219 functions as the Nucleophile in the catalytic mechanism. Catalysis depends on charge relay system residues D287 and H381.

The protein belongs to the AB hydrolase superfamily. Lipase family. Post-translationally, glycosylated.

The protein localises to the secreted. It catalyses the reaction Deacetylation of xylans and xylo-oligosaccharides.. The catalysed reaction is a triacylglycerol + H2O = a diacylglycerol + a fatty acid + H(+). In terms of biological role, lipolytic enzyme that possesses both lipase and acetylxylan esterase activity. Active towards p-nitrophenol esters of various carbon chain length with preference for medium-chain fatty acids (C-8). Also highly active on the acetylated compounds xylose tetra-acetate and oat spelt xylan. This is Lipase A from Sodiomyces alcalophilus (Acremonium alcalophilum).